We begin with the raw amino-acid sequence, 219 residues long: uncharacterized protein (219 aa).

Residue aspartate 58 is part of the active site.

This sequence belongs to the pseudouridine synthase RluA family.

The catalysed reaction is a uridine in RNA = a pseudouridine in RNA. This is an uncharacterized protein from Zymomonas mobilis subsp. mobilis (strain ATCC 31821 / ZM4 / CP4).